Here is a 49-residue protein sequence, read N- to C-terminus: Large ribosomal subunit protein bL33 (49 aa).

The protein belongs to the bacterial ribosomal protein bL33 family.

The sequence is that of Large ribosomal subunit protein bL33 from Syntrophomonas wolfei subsp. wolfei (strain DSM 2245B / Goettingen).